Consider the following 228-residue polypeptide: Translation initiation factor 6 (228 aa).

Its function is as follows. Binds to the 50S ribosomal subunit and prevents its association with the 30S ribosomal subunit to form the 70S initiation complex. The protein is Translation initiation factor 6 of Methanocaldococcus jannaschii (strain ATCC 43067 / DSM 2661 / JAL-1 / JCM 10045 / NBRC 100440) (Methanococcus jannaschii).